The primary structure comprises 259 residues: MDKQTLVIKLGGALIENDEALTALFATLKTFLDEQHRPLVLVHGGGCLVDDLLKGLGLTSTKKNGLRVTPFEQIPFIAGALAGTANKMMMAKAIATDIPAVGLCLADGGLCQVTQLDPALGAVGDCQPGNPALVTGILGQGFLPVVSSIGITAQGQLMNVNADQAATAIAEALGADLVMLSDVSGILDGKGKLVPQLDKVTALDLMEKGVISDGMAVKVKAALHAAETLGKPVCVASWRYPDQLLKLLAGGAVGTQVAI.

Residues 45-46, arginine 67, and asparagine 159 each bind substrate; that span reads GG.

Belongs to the acetylglutamate kinase family. ArgB subfamily.

The protein localises to the cytoplasm. The enzyme catalyses N-acetyl-L-glutamate + ATP = N-acetyl-L-glutamyl 5-phosphate + ADP. The protein operates within amino-acid biosynthesis; L-arginine biosynthesis; N(2)-acetyl-L-ornithine from L-glutamate: step 2/4. In terms of biological role, catalyzes the ATP-dependent phosphorylation of N-acetyl-L-glutamate. The protein is Acetylglutamate kinase of Aeromonas hydrophila subsp. hydrophila (strain ATCC 7966 / DSM 30187 / BCRC 13018 / CCUG 14551 / JCM 1027 / KCTC 2358 / NCIMB 9240 / NCTC 8049).